The primary structure comprises 276 residues: Bis(5'-nucleosyl)-tetraphosphatase, symmetrical (276 aa).

Belongs to the Ap4A hydrolase family.

It carries out the reaction P(1),P(4)-bis(5'-adenosyl) tetraphosphate + H2O = 2 ADP + 2 H(+). Functionally, hydrolyzes diadenosine 5',5'''-P1,P4-tetraphosphate to yield ADP. In Mannheimia succiniciproducens (strain KCTC 0769BP / MBEL55E), this protein is Bis(5'-nucleosyl)-tetraphosphatase, symmetrical.